The primary structure comprises 44 residues: Cytochrome b559 subunit beta (44 aa).

A helical transmembrane segment spans residues 19-35 (WIAVHTLAVPSVFFLGA). Histidine 23 is a heme binding site.

The protein belongs to the PsbE/PsbF family. Heterodimer of an alpha subunit and a beta subunit. PSII is composed of 1 copy each of membrane proteins PsbA, PsbB, PsbC, PsbD, PsbE, PsbF, PsbH, PsbI, PsbJ, PsbK, PsbL, PsbM, PsbT, PsbX, PsbY, PsbZ, Psb30/Ycf12, peripheral proteins PsbO, CyanoQ (PsbQ), PsbU, PsbV and a large number of cofactors. It forms dimeric complexes. Requires heme b as cofactor.

It localises to the cellular thylakoid membrane. Its function is as follows. This b-type cytochrome is tightly associated with the reaction center of photosystem II (PSII). PSII is a light-driven water:plastoquinone oxidoreductase that uses light energy to abstract electrons from H(2)O, generating O(2) and a proton gradient subsequently used for ATP formation. It consists of a core antenna complex that captures photons, and an electron transfer chain that converts photonic excitation into a charge separation. In Cyanothece sp. (strain PCC 7425 / ATCC 29141), this protein is Cytochrome b559 subunit beta.